The chain runs to 81 residues: Photosystem I iron-sulfur center (81 aa).

2 4Fe-4S ferredoxin-type domains span residues 2-31 (SHSV…MIPW) and 39-68 (IASA…VRVY). Residues C11, C14, C17, C21, C48, C51, C54, and C58 each coordinate [4Fe-4S] cluster.

The eukaryotic PSI reaction center is composed of at least 11 subunits. [4Fe-4S] cluster serves as cofactor.

Its subcellular location is the plastid thylakoid membrane. It catalyses the reaction reduced [plastocyanin] + hnu + oxidized [2Fe-2S]-[ferredoxin] = oxidized [plastocyanin] + reduced [2Fe-2S]-[ferredoxin]. In terms of biological role, apoprotein for the two 4Fe-4S centers FA and FB of photosystem I (PSI); essential for photochemical activity. FB is the terminal electron acceptor of PSI, donating electrons to ferredoxin. The C-terminus interacts with PsaA/B/D and helps assemble the protein into the PSI complex. Required for binding of PsaD and PsaE to PSI. PSI is a plastocyanin-ferredoxin oxidoreductase, converting photonic excitation into a charge separation, which transfers an electron from the donor P700 chlorophyll pair to the spectroscopically characterized acceptors A0, A1, FX, FA and FB in turn. This Cuscuta reflexa (Southern Asian dodder) protein is Photosystem I iron-sulfur center.